Consider the following 677-residue polypeptide: Methionine--tRNA ligase (677 aa).

The short motif at 15–25 is the 'HIGH' region element; it reads PYANGSIHLGH. Positions 146, 149, 159, and 162 each coordinate Zn(2+). Residues 333-337 carry the 'KMSKS' region motif; it reads KMSKS. K336 contacts ATP. The region spanning 575–677 is the tRNA-binding domain; it reads DFAKVDLRVA…AGAKPGHQVK (103 aa).

The protein belongs to the class-I aminoacyl-tRNA synthetase family. MetG type 1 subfamily. Homodimer. Requires Zn(2+) as cofactor.

The protein localises to the cytoplasm. The catalysed reaction is tRNA(Met) + L-methionine + ATP = L-methionyl-tRNA(Met) + AMP + diphosphate. In terms of biological role, is required not only for elongation of protein synthesis but also for the initiation of all mRNA translation through initiator tRNA(fMet) aminoacylation. The sequence is that of Methionine--tRNA ligase from Shigella flexneri serotype 5b (strain 8401).